Reading from the N-terminus, the 385-residue chain is Putative non-inhibitory serpin-Z11 (385 aa).

The interval 324-348 is RCL; the sequence is GTTAVEAMYSPSSPGYSPGYQPPRP.

The protein belongs to the serpin family.

This is Putative non-inhibitory serpin-Z11 from Oryza sativa subsp. japonica (Rice).